The chain runs to 185 residues: Elongation factor P (185 aa).

It belongs to the elongation factor P family.

The protein resides in the cytoplasm. The protein operates within protein biosynthesis; polypeptide chain elongation. In terms of biological role, involved in peptide bond synthesis. Stimulates efficient translation and peptide-bond synthesis on native or reconstituted 70S ribosomes in vitro. Probably functions indirectly by altering the affinity of the ribosome for aminoacyl-tRNA, thus increasing their reactivity as acceptors for peptidyl transferase. In Thermotoga petrophila (strain ATCC BAA-488 / DSM 13995 / JCM 10881 / RKU-1), this protein is Elongation factor P.